The primary structure comprises 1034 residues: Sodium bicarbonate cotransporter 3 (1034 aa).

Disordered regions lie at residues 1–31 and 53–99; these read MEADGAGEQMRPLLTRGPDEEAVVDLGKTSS and HVPF…SQRV. Residues 1-476 are Extracellular-facing; it reads MEADGAGEQM…DFKDALSLQC (476 aa). A phosphoserine mark is found at Ser-57, Ser-60, Ser-89, and Ser-155. Residues 60-77 are compositionally biased toward basic residues; it reads SRRRHKHRGHKHHHRRRK. The span at 78–90 shows a compositional bias: basic and acidic residues; the sequence is DKDSDKEDGRESP. Asn-176 carries an N-linked (GlcNAc...) asparagine glycan. Phosphoserine occurs at positions 238, 250, 260, 263, 268, and 271. The span at 250 to 260 shows a compositional bias: polar residues; the sequence is SAPGNLDNSKS. A disordered region spans residues 250 to 276; sequence SAPGNLDNSKSGEMKGNGSGGSRENST. N-linked (GlcNAc...) asparagine glycosylation occurs at Asn-274. Ser-275 and Ser-424 each carry phosphoserine. Residues 477 to 497 form a helical membrane-spanning segment; sequence LASILFLYCACMSPVITFGGL. The Cytoplasmic portion of the chain corresponds to 498 to 505; that stretch reads LGEATEGR. The chain crosses the membrane as a helical span at residues 506–526; the sequence is ISAIESLFGASLTGIAYSLFA. The Extracellular segment spans residues 527 to 563; that stretch reads GQPLTILGSTGPVLVFEKILFKFCRDYHLSYLSLRTS. Residues 564–584 traverse the membrane as a helical segment; that stretch reads IGLWTSFLCIVLVATDASSLV. Over 585–593 the chain is Cytoplasmic; the sequence is CYITRFTEE. Residues 594-614 form a helical membrane-spanning segment; that stretch reads AFAALICIIFIYEALEKLFHL. The Extracellular segment spans residues 615–685; that stretch reads GEIYAFNMHN…MFVGSACGPH (71 aa). A disulfide bond links Cys-634 and Cys-636. 3 N-linked (GlcNAc...) asparagine glycosylation sites follow: Asn-644, Asn-654, and Asn-664. A disulfide bridge links Cys-670 with Cys-682. Residues 686-706 traverse the membrane as a helical segment; it reads GPYVPDVLFWCVVLFFTTFFL. The Cytoplasmic segment spans residues 707–729; the sequence is SSFLKQFKTKGYFPTKVRSTISD. Residues 730–750 traverse the membrane as a helical segment; that stretch reads FAVFLTIVIMVAIDYLVGIPS. Residues 751 to 776 lie on the Extracellular side of the membrane; the sequence is PKLHVPEKFEPTDPSRGWIISPLGDN. Residues 777-797 traverse the membrane as a helical segment; sequence PWWTLLIAAVPALLCTILIFM. Topologically, residues 798–812 are cytoplasmic; it reads DQQITAVIINRKEHK. Residues 813-833 form a helical membrane-spanning segment; sequence LKFIPMPVLYGVFLYMGVSSL. Positions 815 to 915 are essential for cell membrane localization and transport activity; that stretch reads FIPMPVLYGV…MDLCFTKREL (101 aa). Topologically, residues 834–876 are extracellular; the sequence is KGIQFFDRIKLFGMPAKHQPDLIYLRYVPLWKVHVFTVVQLTC. The chain crosses the membrane as a helical span at residues 877-897; it reads LVLLWVIKASAAAVVFPMMVL. The Cytoplasmic portion of the chain corresponds to 898–1034; sequence ALVFVRKLMD…KKYMDAETSL (137 aa). Residues 918-920 are CA2-binding; sequence LDD. The disordered stretch occupies residues 926–946; that stretch reads KKKKEDDKKKKEKEEAERMLQ. At Thr-951 the chain carries Phosphothreonine. Ser-960 and Ser-1033 each carry phosphoserine. The PDZ-binding signature appears at 1031–1034; it reads ETSL.

Belongs to the anion exchanger (TC 2.A.31) family. As to quaternary structure, forms a complex with ATP6V1B1 and NHERF1/EBP50. Interacts in a pH dependent-manner with CA2/carbonic anhydrase 2. Interacts with CFTR through NHERF1/EBP50. Interacts with USH1C. As to expression, expressed in the spiral ligament throughout the cochlea and in photoreceptors of the outer plexiform layer of the retina (at protein level).

The protein localises to the basolateral cell membrane. It localises to the apical cell membrane. The protein resides in the cell projection. Its subcellular location is the stereocilium. It is found in the cell membrane. The enzyme catalyses hydrogencarbonate(in) + Na(+)(in) = hydrogencarbonate(out) + Na(+)(out). Activity is inhibited by 4,4'-di-isothiocyanatostilbene-2,2'-disulfonic acid (DIDS - an inhibitor of several anion channels and transporters). In terms of biological role, electroneutral sodium- and bicarbonate-dependent cotransporter with a Na(+):HCO3(-) 1:1 stoichiometry. Mediates the sodium-dependent bicarbonate transport important for pH recovery after acid load as well as for regulation of steady-state pH in the duodenum and vascular smooth muscle cells. Plays a key role in macrophage acidification, mediating bicarbonate import into the cytoplasm which is crucial for net acid extrusion and maintenance of cytoplasmic pH during phagocytosis. Provides cellular bicarbonate for de novo purine and pyrimidine synthesis and is a key mediator of de novo nucleotide synthesis downstream of mTORC1 signaling in proliferating cells. May be involved in maintaining locomotor activity, exploratory behavior, and hearing. The sequence is that of Sodium bicarbonate cotransporter 3 (Slc4a7) from Mus musculus (Mouse).